Here is a 109-residue protein sequence, read N- to C-terminus: Protein AC78 (109 aa).

Residues 61 to 81 (GIIILISVVAFIALFLLLYVI) traverse the membrane as a helical segment.

The protein localises to the host membrane. It is found in the virion. Functionally, plays an essential role in budded virus production and occlusion body formation. The polypeptide is Protein AC78 (AC78) (Autographa californica nuclear polyhedrosis virus (AcMNPV)).